The primary structure comprises 1090 residues: Protein CHROMATIN REMODELING 24 (1090 aa).

Disordered stretches follow at residues 1–51 and 247–273; these read MAEN…MIKL and VGKQNSYSGRHFDDNSEDNRQGYNLDR. A Nuclear localization signal motif is present at residues 44 to 51; sequence TKKSMIKL. The span at 256-273 shows a compositional bias: basic and acidic residues; the sequence is RHFDDNSEDNRQGYNLDR. A Helicase ATP-binding domain is found at 389 to 564; that stretch reads WSLHTQGKGG…WALFNFSCPG (176 aa). 402 to 409 serves as a coordination point for ATP; it reads DDMGLGKT. The DEAH box signature appears at 515–518; sequence DEGH. The Helicase C-terminal domain maps to 736-895; it reads FIMSLLENLI…IRYFSQQDLR (160 aa). The stretch at 1043–1069 forms a coiled coil; it reads DGGAKIQKQIAELTRELKDMKAAERIN.

It belongs to the SNF2/RAD54 helicase family.

Its subcellular location is the nucleus. In terms of biological role, DNA helicase that acts as an essential component of the spindle assembly checkpoint. Probable chromatin remodeling factor that regulate homologous recombination (HR) and non-homologous recombination (NHR). The polypeptide is Protein CHROMATIN REMODELING 24 (Arabidopsis thaliana (Mouse-ear cress)).